Consider the following 191-residue polypeptide: Putative 3-methyladenine DNA glycosylase (191 aa).

The protein belongs to the DNA glycosylase MPG family.

The chain is Putative 3-methyladenine DNA glycosylase from Cutibacterium acnes (strain DSM 16379 / KPA171202) (Propionibacterium acnes).